Here is a 478-residue protein sequence, read N- to C-terminus: NADH-quinone oxidoreductase subunit N (478 aa).

13 helical membrane-spanning segments follow: residues 7-27 (SFIPAIPEIVLLTLTSLLLIA), 46-66 (ILLVVGYLVLTSFSTSQVLTF), 74-94 (AFGDILKLVIVVVSMGIFLFS), 109-129 (FTLGLFGVLGMFVMVSAYNLI), 163-183 (FVLGALATGMLLYGFSMIYGA), 204-224 (VVLSFGVVFIVIGLAFKLGAV), 237-257 (APTAVTLYIGTAPKIAAFAML), 273-293 (QSLIVMISVLSLIVGAVITLV), 300-320 (LLAYSGIGHIGFILLGIIAAN), 328-348 (MFYTIVYSITALAGFGMIVAL), 371-391 (LALMMLFIMFSMAGIPPFVGF), 405-425 (GFTWLAVLAVVMAVISAFYYL), and 451-471 (WAVSFVSIALLLLGLMPSSLI).

This sequence belongs to the complex I subunit 2 family. NDH-1 is composed of 14 different subunits. Subunits NuoA, H, J, K, L, M, N constitute the membrane sector of the complex.

The protein resides in the cell inner membrane. It carries out the reaction a quinone + NADH + 5 H(+)(in) = a quinol + NAD(+) + 4 H(+)(out). In terms of biological role, NDH-1 shuttles electrons from NADH, via FMN and iron-sulfur (Fe-S) centers, to quinones in the respiratory chain. The immediate electron acceptor for the enzyme in this species is believed to be ubiquinone. Couples the redox reaction to proton translocation (for every two electrons transferred, four hydrogen ions are translocated across the cytoplasmic membrane), and thus conserves the redox energy in a proton gradient. This is NADH-quinone oxidoreductase subunit N from Hydrogenovibrio crunogenus (strain DSM 25203 / XCL-2) (Thiomicrospira crunogena).